The primary structure comprises 489 residues: UDP-glycosyltransferase 85A1 (489 aa).

UDP-alpha-D-glucose contacts are provided by residues Ser307, Cys364–Gln366, His381–Glu389, and Phe403–Gln406.

It belongs to the UDP-glycosyltransferase family. Expressed in root tips, lateral root initials, root apex, shoots, leaf periphery, leaf primordia and flowers.

Its function is as follows. Involved in the O-glucosylation of trans-zeatin and dihydrozeatin. Also active in vitro on cis-zeatin. Not active on N-glucosylated substrates. The chain is UDP-glycosyltransferase 85A1 (UGT85A1) from Arabidopsis thaliana (Mouse-ear cress).